A 701-amino-acid chain; its full sequence is ER-retained PMA1-suppressing protein 1 (701 aa).

The first 27 residues, 1–27 (MKMNLKRLVVTFFSCITFLLKFTIAAA), serve as a signal peptide directing secretion. The region spanning 28 to 142 (EPPEGFPEPL…LIAFARRESM (115 aa)) is the Thioredoxin 1 domain. A disulfide bridge links Cys-60 with Cys-63. Asn-85 carries N-linked (GlcNAc...) asparagine glycosylation. A disulfide bridge links Cys-200 with Cys-203. 3 N-linked (GlcNAc...) asparagine glycosylation sites follow: Asn-264, Asn-299, and Asn-370. In terms of domain architecture, Thioredoxin 2 spans 408–446 (PTFFMFKDGDPISYVFPGYSTTEMRNIDAIMDWVKKYSN). The helical transmembrane segment at 646–666 (IIHGNGMPGYLIVIVLFIAIL) threads the bilayer.

This sequence belongs to the protein disulfide isomerase family. In terms of assembly, interacts with mutated PMA1-D378N but not wild type PMA1. Interacts with EUG1, KAR2, MPD1 and PDI1.

It localises to the endoplasmic reticulum membrane. The enzyme catalyses Catalyzes the rearrangement of -S-S- bonds in proteins.. Acts as a membrane-bound chaperone in endoplasmic reticulum quality control. Probably facilitates presentation of substrate to membrane-bound components of the degradation machinery. The sequence is that of ER-retained PMA1-suppressing protein 1 (EPS1) from Saccharomyces cerevisiae (strain ATCC 204508 / S288c) (Baker's yeast).